The primary structure comprises 592 residues: Bifunctional purine biosynthesis protein ATIC (592 aa).

Methionine 1 is modified (N-acetylmethionine). An MGS-like domain is found at 1–146; sequence MAPGHLALFS…KNHARVTVVC (146 aa). Residues 1-198 form an IMP cyclohydrolase region; it reads MAPGHLALFS…ISDYFRKQYS (198 aa). Residues 12–14, 34–37, 64–67, 101–102, and 125–126 contribute to the IMP site; these read SDK, SGGT, RVKT, CN, and DI. The Proton donor/acceptor; for FAICAR cyclization activity role is filled by lysine 137. An N6-acetyllysine modification is found at lysine 199. The AICAR formyltransferase stretch occupies residues 199–592; sequence KGISQMPLRY…AHTNLRLFHH (394 aa). 5-amino-1-(5-phospho-beta-D-ribosyl)imidazole-4-carboxamide-binding positions include 207–208, histidine 267, glycine 316, aspartate 339, asparagine 431, and arginine 451; that span reads RY. Residue histidine 267 is the Proton acceptor; for AICAR formyltransferase activity of the active site. Residue isoleucine 452 coordinates (6R)-10-formyltetrahydrofolate. Residue phenylalanine 541 participates in 5-amino-1-(5-phospho-beta-D-ribosyl)imidazole-4-carboxamide binding. (6R)-10-formyltetrahydrofolate contacts are provided by residues aspartate 546 and 565 to 566; that span reads SA. 5-amino-1-(5-phospho-beta-D-ribosyl)imidazole-4-carboxamide is bound at residue arginine 588.

This sequence belongs to the PurH family. As to quaternary structure, homodimer. Associates with internalized INSR complexes on Golgi/endosomal membranes. Interacts with INSR; ATIC together with PRKAA2/AMPK2 and HACD3/PTPLAD1 is proposed to be part of a signaling network regulating INSR autophosphorylation and endocytosis.

The protein localises to the cytoplasm. It is found in the cytosol. It carries out the reaction (6R)-10-formyltetrahydrofolate + 5-amino-1-(5-phospho-beta-D-ribosyl)imidazole-4-carboxamide = 5-formamido-1-(5-phospho-D-ribosyl)imidazole-4-carboxamide + (6S)-5,6,7,8-tetrahydrofolate. The enzyme catalyses 10-formyldihydrofolate + 5-amino-1-(5-phospho-beta-D-ribosyl)imidazole-4-carboxamide = 5-formamido-1-(5-phospho-D-ribosyl)imidazole-4-carboxamide + 7,8-dihydrofolate. It catalyses the reaction IMP + H2O = 5-formamido-1-(5-phospho-D-ribosyl)imidazole-4-carboxamide. Its pathway is purine metabolism; IMP biosynthesis via de novo pathway; 5-formamido-1-(5-phospho-D-ribosyl)imidazole-4-carboxamide from 5-amino-1-(5-phospho-D-ribosyl)imidazole-4-carboxamide (10-formyl THF route): step 1/1. It participates in purine metabolism; IMP biosynthesis via de novo pathway; IMP from 5-formamido-1-(5-phospho-D-ribosyl)imidazole-4-carboxamide: step 1/1. AMP and XMP inhibit AICAR formyltransferase activity. Bifunctional enzyme that catalyzes the last two steps of purine biosynthesis. Acts as a transformylase that incorporates a formyl group to the AMP analog AICAR (5-amino-1-(5-phospho-beta-D-ribosyl)imidazole-4-carboxamide) to produce the intermediate formyl-AICAR (FAICAR). Can use both 10-formyldihydrofolate and 10-formyltetrahydrofolate as the formyl donor in this reaction. Also catalyzes the cyclization of FAICAR to inosine monophosphate (IMP). Promotes insulin receptor/INSR autophosphorylation and is involved in INSR internalization. The chain is Bifunctional purine biosynthesis protein ATIC (ATIC) from Pongo abelii (Sumatran orangutan).